The primary structure comprises 100 residues: Defensin-like protein 316 (100 aa).

The signal sequence occupies residues 1 to 18 (MASHIICYIFCIIKLSCA). 3 disulfide bridges follow: cysteine 21-cysteine 84, cysteine 43-cysteine 64, and cysteine 53-cysteine 76.

Belongs to the DEFL family.

Its subcellular location is the secreted. This chain is Defensin-like protein 316, found in Arabidopsis thaliana (Mouse-ear cress).